The following is a 70-amino-acid chain: Probable protein transport protein Sec61 subunit gamma (70 aa).

At 1–33 (MADNADDLFQIPKNFYKEGSHFIKRCVKPDRKE) the chain is on the cytoplasmic side. Residues 34 to 62 (FLSISKAVATGFVLMGLIGYIIKLIHIPI) form a helical membrane-spanning segment. The Extracellular portion of the chain corresponds to 63 to 70 (NKVLVGGA).

This sequence belongs to the SecE/SEC61-gamma family. Heterotrimeric complex composed of SEC61-alpha, SEC61-beta and SEC61-gamma.

It is found in the endoplasmic reticulum membrane. In terms of biological role, necessary for protein translocation in the endoplasmic reticulum. The sequence is that of Probable protein transport protein Sec61 subunit gamma (sss1) from Schizosaccharomyces pombe (strain 972 / ATCC 24843) (Fission yeast).